Reading from the N-terminus, the 137-residue chain is Acyl carrier protein 4, chloroplastic (137 aa).

The N-terminal 48 residues, 1–48, are a transit peptide targeting the chloroplast; sequence MASLSTTSLSFKAPSTTISQVLRKASSSQSVTFGRFTSSTKSLRLQIS. Residues 53-128 enclose the Carrier domain; that stretch reads AETVQKVSDI…EAADLIEDLV (76 aa). Position 88 is an O-(pantetheine 4'-phosphoryl)serine (Ser-88).

This sequence belongs to the acyl carrier protein (ACP) family. 4'-phosphopantetheine is transferred from CoA to a specific serine of apo-ACP by acpS. This modification is essential for activity because fatty acids are bound in thioester linkage to the sulfhydryl of the prosthetic group.

Its subcellular location is the plastid. It localises to the chloroplast. Its function is as follows. Carrier of the growing fatty acid chain in fatty acid biosynthesis that plays a major role in the biosynthesis of fatty acids in leaves. Required for the biosynthesis of chloroplast photosynthetic membrane lipids such as monogalactosyldiacylglycerol, digalactosyldiacylglycerol and phosphatidylglycerol. Is essential for the biosynthesis of the cuticular wax and cutin polymers in leaves, and for the establishment of systemic acquired resistance (SAR). In Arabidopsis thaliana (Mouse-ear cress), this protein is Acyl carrier protein 4, chloroplastic (ACP4).